The chain runs to 490 residues: Myocilin (490 aa).

The N-terminal stretch at 1–18 is a signal peptide; the sequence is MPAVQLLLLACLLGGVGA. A coiled-coil region spans residues 51–170; sequence GQAMLAIQEL…QEVASLRRGQ (120 aa). Residues 152–186 are disordered; that stretch reads LARRLESSSQEVASLRRGQCPQAHSSSQDVPSGSR. The span at 173–182 shows a compositional bias: polar residues; the sequence is QAHSSSQDVP. Residues 230–489 form the Olfactomedin-like domain; the sequence is GCGELVWVGE…MVSYDIKLSR (260 aa). C231 and C419 are disulfide-bonded. The Ca(2+) site is built by D366, N414, A415, I463, and D464. The Microbody targeting signal signature appears at 488-490; that stretch reads SRL.

Homodimer (via N-terminus). Can also form higher oligomers. Interacts with OLFM3, FN1, NRCAM, GLDN and NFASC. Interacts (via N-terminus) with MYL2. Interacts with SFRP1, FRZB, FZD7, FZD10, FZD1 and WIF1; regulates Wnt signaling. Interacts with SNTA1; regulates muscle hypertrophy. Interacts with ERBB2 and ERBB3; activates ERBB2-ERBB3 signaling pathway. Interacts with SNCG; affects its secretion and its aggregation. In terms of processing, palmitoylated. Undergoes a calcium-dependent proteolytic cleavage at Gln-212 by CAPN2 in the endoplasmic reticulum. The result is the production of two fragments, one of 35 kDa containing the C-terminal olfactomedin-like domain, and another of 20 kDa containing the N-terminal leucine zipper-like domain. Post-translationally, glycosylated. In terms of tissue distribution, the myocilin 35 kDa fragment is detected in iris and ciliary body.

The protein localises to the secreted. The protein resides in the golgi apparatus. Its subcellular location is the cytoplasmic vesicle. It is found in the extracellular space. It localises to the extracellular matrix. The protein localises to the extracellular exosome. The protein resides in the mitochondrion. Its subcellular location is the mitochondrion intermembrane space. It is found in the mitochondrion inner membrane. It localises to the mitochondrion outer membrane. The protein localises to the rough endoplasmic reticulum. The protein resides in the cell projection. Its subcellular location is the cilium. It is found in the endoplasmic reticulum. Functionally, secreted glycoprotein regulating the activation of different signaling pathways in adjacent cells to control different processes including cell adhesion, cell-matrix adhesion, cytoskeleton organization and cell migration. Promotes substrate adhesion, spreading and formation of focal contacts. Negatively regulates cell-matrix adhesion and stress fiber assembly through Rho protein signal transduction. Modulates the organization of actin cytoskeleton by stimulating the formation of stress fibers through interactions with components of Wnt signaling pathways. Promotes cell migration through activation of PTK2 and the downstream phosphatidylinositol 3-kinase signaling. Plays a role in bone formation and promotes osteoblast differentiation in a dose-dependent manner through mitogen-activated protein kinase signaling. Mediates myelination in the peripheral nervous system through ERBB2/ERBB3 signaling. Plays a role as a regulator of muscle hypertrophy through the components of dystrophin-associated protein complex. Involved in positive regulation of mitochondrial depolarization. Plays a role in neurite outgrowth. May participate in the obstruction of fluid outflow in the trabecular meshwork. This is Myocilin (MYOC) from Bos taurus (Bovine).